The sequence spans 398 residues: Sex hormone-binding globulin (398 aa).

The signal sequence occupies residues 1–31; the sequence is MATPPLVPLLLLLLLLLPHAHHRLALRSVLA. Laminin G-like domains follow at residues 41–213 and 220–386; these read VHLI…RRSC and GIFF…THSC. 2 disulfide bridges follow: Cys189/Cys213 and Cys358/Cys386. Asn376 and Asn392 each carry an N-linked (GlcNAc...) asparagine glycan.

As to quaternary structure, homodimer.

It localises to the secreted. Functionally, functions as an androgen transport protein, but may also be involved in receptor mediated processes. Each dimer binds one molecule of steroid. Specific for 5-alpha-dihydrotestosterone, testosterone, and 17-beta-estradiol. Regulates the plasma metabolic clearance rate of steroid hormones by controlling their plasma concentration. This chain is Sex hormone-binding globulin (SHBG), found in Oryctolagus cuniculus (Rabbit).